Consider the following 195-residue polypeptide: ATP-dependent Clp protease proteolytic subunit (195 aa).

The active-site Nucleophile is the serine 99. Histidine 124 is a catalytic residue.

Belongs to the peptidase S14 family. As to quaternary structure, fourteen ClpP subunits assemble into 2 heptameric rings which stack back to back to give a disk-like structure with a central cavity, resembling the structure of eukaryotic proteasomes.

The protein localises to the cytoplasm. It carries out the reaction Hydrolysis of proteins to small peptides in the presence of ATP and magnesium. alpha-casein is the usual test substrate. In the absence of ATP, only oligopeptides shorter than five residues are hydrolyzed (such as succinyl-Leu-Tyr-|-NHMec, and Leu-Tyr-Leu-|-Tyr-Trp, in which cleavage of the -Tyr-|-Leu- and -Tyr-|-Trp bonds also occurs).. Functionally, cleaves peptides in various proteins in a process that requires ATP hydrolysis. Has a chymotrypsin-like activity. Plays a major role in the degradation of misfolded proteins. The sequence is that of ATP-dependent Clp protease proteolytic subunit from Coxiella burnetii (strain CbuG_Q212) (Coxiella burnetii (strain Q212)).